Consider the following 371-residue polypeptide: Dihydroorotate dehydrogenase (quinone) (371 aa).

Residues 79–83 (AGFDK) and threonine 103 each bind FMN. Lysine 83 provides a ligand contact to substrate. 128-132 (NRMGF) contributes to the substrate binding site. Residues asparagine 156 and asparagine 189 each contribute to the FMN site. Residue asparagine 189 coordinates substrate. The active-site Nucleophile is the serine 192. Residue asparagine 194 coordinates substrate. FMN contacts are provided by lysine 225 and threonine 253. A substrate-binding site is contributed by 254 to 255 (NT). FMN-binding positions include glycine 279, glycine 308, and 329–330 (YT).

Belongs to the dihydroorotate dehydrogenase family. Type 2 subfamily. Monomer. FMN serves as cofactor.

It is found in the cell membrane. It catalyses the reaction (S)-dihydroorotate + a quinone = orotate + a quinol. Its pathway is pyrimidine metabolism; UMP biosynthesis via de novo pathway; orotate from (S)-dihydroorotate (quinone route): step 1/1. Functionally, catalyzes the conversion of dihydroorotate to orotate with quinone as electron acceptor. This Corynebacterium glutamicum (strain R) protein is Dihydroorotate dehydrogenase (quinone).